Here is a 165-residue protein sequence, read N- to C-terminus: Ubiquitin-like protein 4B (165 aa).

The 76-residue stretch at 1–76 (MFLTVKLLLG…ISVVVRPLEK (76 aa)) folds into the Ubiquitin-like domain. The tract at residues 139–165 (EPLAQPTGEREPEVLSPNKEEEKEAVQ) is disordered. A compositionally biased stretch (basic and acidic residues) spans 146–165 (GEREPEVLSPNKEEEKEAVQ).

The protein resides in the cytoplasm. The sequence is that of Ubiquitin-like protein 4B (UBL4B) from Bos taurus (Bovine).